A 120-amino-acid chain; its full sequence is Large ribosomal subunit protein uL18 (120 aa).

It belongs to the universal ribosomal protein uL18 family. As to quaternary structure, part of the 50S ribosomal subunit; part of the 5S rRNA/L5/L18/L25 subcomplex. Contacts the 5S and 23S rRNAs.

Its function is as follows. This is one of the proteins that bind and probably mediate the attachment of the 5S RNA into the large ribosomal subunit, where it forms part of the central protuberance. The protein is Large ribosomal subunit protein uL18 of Methylorubrum populi (strain ATCC BAA-705 / NCIMB 13946 / BJ001) (Methylobacterium populi).